Reading from the N-terminus, the 210-residue chain is Thymidylate kinase (210 aa).

10–17 (GLEGAGKT) is an ATP binding site.

The protein belongs to the thymidylate kinase family.

It catalyses the reaction dTMP + ATP = dTDP + ADP. Its function is as follows. Phosphorylation of dTMP to form dTDP in both de novo and salvage pathways of dTTP synthesis. The sequence is that of Thymidylate kinase from Erwinia tasmaniensis (strain DSM 17950 / CFBP 7177 / CIP 109463 / NCPPB 4357 / Et1/99).